The chain runs to 110 residues: FMRFamide-like neuropeptides 11 (110 aa).

Positions 1-22 (MTQFSALALLLIVFVAASFAQS) are cleaved as a signal peptide. The propeptide occupies 23-29 (YDDVSAE). 2 positions are modified to phenylalanine amide: Phe-40 and Phe-54. Residues 60-85 (LDEEDFAPESPLQGKRNGAPQPFVRF) form a disordered region. Gln-72 is subject to Glutamine amide. Position 85 is a phenylalanine amide (Phe-85). Positions 88–110 (SGQLDHMHDLLSTLQKLKFANNK) are excised as a propeptide.

Belongs to the FARP (FMRFamide related peptide) family. Each flp gene is expressed in a distinct set of neurons. Flp-11 is expressed in the DD, VD and DVB motor neurons, the PVC and URX interneurons, and the AUA, BAG, DA, LUA, and SAB neurons. Also expressed in head muscle, socket or sheath cells and uterine cells. Expressed exclusively in PHC sensory neurons in males. Expressed in AVK and RIS interneurons.

Its subcellular location is the secreted. Its function is as follows. FMRFamides and FMRFamide-like peptides are neuropeptides. Induces sleep-like quiescence behavior following release from RIS interneuron. Helps to sustain locomotion stop after gamma-aminobutyric acid (GABA) induces fast slowing response. Inhibits the late-stage body bend swimming frequency in animals through several receptors including frpr-3, npr-4 and npr-22. In terms of biological role, potent inhibitor of the activity of the dissected pharyngeal myogenic muscle system. Acts as a ligand for the npr-22 receptor in vitro. Acts as a ligand for the npr-22 receptor in vitro. The sequence is that of FMRFamide-like neuropeptides 11 from Caenorhabditis elegans.